We begin with the raw amino-acid sequence, 216 residues long: Thymidine kinase (216 aa).

ATP-binding positions include 9–16 (GTMDCGKS) and 86–89 (DEAQ). E87 functions as the Proton acceptor in the catalytic mechanism.

It belongs to the thymidine kinase family. As to quaternary structure, homotetramer.

It localises to the cytoplasm. It catalyses the reaction thymidine + ATP = dTMP + ADP + H(+). In Streptomyces avermitilis (strain ATCC 31267 / DSM 46492 / JCM 5070 / NBRC 14893 / NCIMB 12804 / NRRL 8165 / MA-4680), this protein is Thymidine kinase.